The primary structure comprises 24 residues: Conotoxin PIVF (24 aa).

Intrachain disulfides connect cysteine 2–cysteine 10, cysteine 3–cysteine 15, and cysteine 13–cysteine 19. Lysine 24 is modified (lysine amide).

This sequence belongs to the conotoxin A superfamily. As to expression, expressed by the venom duct.

It localises to the secreted. Probable neurotoxin with ion channel inhibitor activity. In vivo, elicits dose-dependently excitatory activity upon injection into fish. Its action is slowly reversible. In Conus purpurascens (Purple cone), this protein is Conotoxin PIVF.